A 368-amino-acid polypeptide reads, in one-letter code: Proton-coupled zinc antiporter SLC30A8 (368 aa).

Topologically, residues 1 to 78 (MEFLERTYLV…AKWRLCAASA (78 aa)) are cytoplasmic. 3 residues coordinate Zn(2+): H51, C52, and H53. Positions 51-53 (HCH) match the HCH Motif; seals regulatory zinc-binding pocket motif. Residues 79-99 (ICFFFMVAEVVGGHVAGSLAV) traverse the membrane as a helical segment. The Lumenal, vesicle segment spans residues 100–102 (LTD). The helical transmembrane segment at 103–123 (AAHLLIDLTSFLLSLFSLWLS) threads the bilayer. 2 residues coordinate Zn(2+): H105 and D109. Topologically, residues 124 to 139 (SRPPSKRLTFGWYRAE) are cytoplasmic. The chain crosses the membrane as a helical span at residues 140–160 (ILGALLSVLCIWVVTGVLVYL). Topologically, residues 161-174 (ACERLLYPDYQIQA) are lumenal, vesicle. Residues 175 to 195 (GIMITVSGCAVAANIVLTLIL) form a helical membrane-spanning segment. At 196-216 (HQRHLGHNHKDAQANASVRAA) the chain is on the cytoplasmic side. Residues 217-237 (FVHALGDVFQSTSVLISALII) form a helical membrane-spanning segment. Zn(2+) is bound by residues H219 and D223. The Lumenal, vesicle segment spans residues 238 to 245 (YFKPDYKM). Residues 246-266 (ADPVCTFISSVLALASTVMIL) form a helical membrane-spanning segment. Residues 267–368 (KDFSILLMEG…SCLLCEDPQD (102 aa)) are Cytoplasmic-facing. The Zn(2+) site is built by H300, H317, H344, E351, C360, and C363.

The protein belongs to the cation diffusion facilitator (CDF) transporter (TC 2.A.4) family. SLC30A subfamily. In terms of assembly, homodimer. In terms of tissue distribution, expressed in endocrine pancreatic islet alpha and beta cells. May be more abundant in beta cells than in alpha cells. Expressed in cubical epithelium lining thyroid follicles (at protein level). In the adrenal gland, detected in the cortex, but not in the medulla (at protein level).

The protein resides in the cytoplasmic vesicle. It is found in the secretory vesicle membrane. Its subcellular location is the cell membrane. It catalyses the reaction Zn(2+)(in) + 2 H(+)(out) = Zn(2+)(out) + 2 H(+)(in). In terms of biological role, proton-coupled zinc ion antiporter mediating the entry of zinc into the lumen of pancreatic beta cell secretory granules, thereby regulating insulin secretion. In Rattus norvegicus (Rat), this protein is Proton-coupled zinc antiporter SLC30A8.